Consider the following 328-residue polypeptide: Integrator complex subunit 12 (328 aa).

The tract at residues Met1 to Leu45 is sufficient for binding to IntS1 and IntS9 and for 3'-end snRNA processing. The PHD-type zinc finger occupies Asp128–Lys185. 4 stretches are compositionally biased toward low complexity: residues Lys215–Ser233, Ser241–Ser264, Lys274–Ala283, and Ser292–Ser311. Positions Lys215 to Gln328 are disordered.

The protein belongs to the Integrator subunit 12 family. Belongs to the multiprotein complex Integrator, at least composed of IntS1, IntS2, IntS3, IntS4, omd/IntS5, IntS6, defl/IntS7, IntS8, IntS9, IntS10, IntS11, IntS12, asun/IntS13, IntS14 and IntS15. The core complex associates with protein phosphatase 2A subunits mts/PP2A and Pp2A-29B, to form the Integrator-PP2A (INTAC) complex. Within the complex, interacts with IntS1 and IntS9. Interaction with IntS1 is likely to be important for promoting 3'-end processing of snRNAs.

The protein resides in the nucleus. Its function is as follows. Component of the integrator complex, a multiprotein complex that terminates RNA polymerase II (Pol II) transcription in the promoter-proximal region of genes. The integrator complex provides a quality checkpoint during transcription elongation by driving premature transcription termination of transcripts that are unfavorably configured for transcriptional elongation: the complex terminates transcription by (1) catalyzing dephosphorylation of the C-terminal domain (CTD) of Pol II subunit Polr2A/Rbp1 and Spt5, and (2) degrading the exiting nascent RNA transcript via endonuclease activity. The integrator complex is also involved in the 3'-end processing of the U7 snRNA, and also the spliceosomal snRNAs U1, U2, U4 and U5. Required for the normal expression of the Integrator complex component IntS1. The sequence is that of Integrator complex subunit 12 from Drosophila melanogaster (Fruit fly).